The following is a 501-amino-acid chain: Protein disulfide isomerase-like 1-1 (501 aa).

Residues 1-23 (MAMRGFTLFSILVLSLCASSIRS) form the signal peptide. The Thioredoxin 1 domain maps to 24–141 (EETETKEFVL…IVTYLKKQSG (118 aa)). Residue asparagine 39 is glycosylated (N-linked (GlcNAc...) asparagine). Active-site nucleophile residues include cysteine 59 and cysteine 62. Cysteine 59 and cysteine 62 are joined by a disulfide. A glycan (N-linked (GlcNAc...) asparagine) is linked at asparagine 275. A Thioredoxin 2 domain is found at 354 to 482 (FKDGKIAPHK…FISFVDKNKD (129 aa)). Active-site nucleophile residues include cysteine 404 and cysteine 407. Residues cysteine 404 and cysteine 407 are joined by a disulfide bond. Positions 498 to 501 (KDEL) match the Prevents secretion from ER motif.

Belongs to the protein disulfide isomerase family. In terms of assembly, interacts with RD21A, At3g19390, At5g43060. In terms of tissue distribution, highly expressed in flowers, stems and immature seeds, and at lower levels in leaves and siliques (at protein level).

The protein localises to the endoplasmic reticulum lumen. It localises to the vacuole. It catalyses the reaction Catalyzes the rearrangement of -S-S- bonds in proteins.. Functionally, protein disulfide isomerase that associates with RD21A protease for trafficking from the ER through the Golgi to lytic and protein storage vacuoles of endothelial cells in developing seeds. Regulates the timing of programmed cell death (PCD) of the endothelial cells by chaperoning and inhibiting cysteine proteases during their trafficking to vacuoles. This is Protein disulfide isomerase-like 1-1 (PDIL1-1) from Arabidopsis thaliana (Mouse-ear cress).